The chain runs to 377 residues: Hsc70-interacting protein 2 (377 aa).

The segment at 68–123 (AKANEPANAPEDSEDEKSLSDPESDVELDMEGVIEADSDPAQPMGNYSKKATEEEV) is disordered. Ser-80 bears the Phosphoserine mark. Positions 89-105 (PESDVELDMEGVIEADS) are enriched in acidic residues. TPR repeat units lie at residues 126-159 (ASEL…SPGN), 161-193 (LFHA…NSDL), and 195-227 (AGYK…DFDE). Residues 239-276 (NAKKIEQHRLKQERRQAERKIKERQRDQRRARKEQEKH) adopt a coiled-coil conformation. The segment covering 243–277 (IEQHRLKQERRQAERKIKERQRDQRRARKEQEKHN) has biased composition (basic and acidic residues). Disordered stretches follow at residues 243 to 302 (IEQH…DILG) and 344 to 377 (DVGA…DGLD). Positions 282-293 (GSSGEFSGGNPG) are enriched in gly residues. The STI1 domain maps to 294–336 (NGNMSDILGAMSDPEVSAAIQDILSNPGNITKYASNPKIYNLI). Residues 355 to 369 (KAGKPSEPKPKKDSA) show a composition bias toward basic and acidic residues.

The protein belongs to the FAM10 family. In terms of assembly, homotetramer. Interacts with Hsc70 as well as DNAJ homologs and Hsp90.

Its subcellular location is the cytoplasm. In terms of biological role, one HIP oligomer binds the ATPase domains of at least two Hsc70 molecules dependent on activation of the Hsc70 ATPase by Hsp40. Stabilizes the ADP state of Hsc70 that has a high affinity for substrate protein. Through its own chaperone activity, it may contribute to the interaction of Hsc70 with various target proteins. The sequence is that of Hsc70-interacting protein 2 from Drosophila melanogaster (Fruit fly).